A 722-amino-acid chain; its full sequence is Peroxisomal bifunctional enzyme (722 aa).

Positions 1-281 (MAEYLRLPHS…FAEKSANKWS (281 aa)) are enoyl-CoA hydratase / isomerase. Ala-2 carries the post-translational modification Blocked amino end (Ala). Lys-38 bears the N6-succinyllysine mark. Substrate is bound at residue Gly-100. At Lys-173 the chain carries N6-acetyllysine; alternate. Lys-173 is subject to N6-succinyllysine; alternate. Lys-182 carries the post-translational modification N6-succinyllysine. 2 positions are modified to N6-acetyllysine; alternate: Lys-190 and Lys-218. An N6-succinyllysine; alternate mark is found at Lys-190 and Lys-218. Lys-241 is subject to N6-succinyllysine. Lys-249 bears the N6-acetyllysine mark. Lys-253 is subject to N6-succinyllysine. N6-acetyllysine; alternate is present on Lys-275. N6-succinyllysine; alternate is present on Lys-275. N6-succinyllysine occurs at positions 279, 289, and 330. The interval 282 to 571 (TPSGASWKTA…DMLCEAGRFG (290 aa)) is 3-hydroxyacyl-CoA dehydrogenase. N6-acetyllysine occurs at positions 345, 359, and 463. Residue Lys-531 is modified to N6-succinyllysine. Thr-547 is modified (phosphothreonine). Lys-576 carries the N6-succinyllysine modification. N6-acetyllysine; alternate occurs at positions 583, 590, and 709. Lys-583, Lys-590, and Lys-709 each carry N6-succinyllysine; alternate. Residues 720–722 (SKL) carry the Microbody targeting signal motif. Position 721 is an N6-succinyllysine (Lys-721).

The protein in the N-terminal section; belongs to the enoyl-CoA hydratase/isomerase family. In the C-terminal section; belongs to the 3-hydroxyacyl-CoA dehydrogenase family. As to quaternary structure, monomer. Post-translationally, acetylated, leading to enhanced enzyme activity. Acetylation is enhanced by up to 80% after treatment either with trichostin A (TCA) or with nicotinamide (NAM) with highest increase on Lys-345. Acetylation and enzyme activity increased by about 1.5% on addition of fatty acids.

It is found in the peroxisome. The enzyme catalyses a (3S)-3-hydroxyacyl-CoA = a (2E)-enoyl-CoA + H2O. It catalyses the reaction a 4-saturated-(3S)-3-hydroxyacyl-CoA = a (3E)-enoyl-CoA + H2O. The catalysed reaction is a (3Z)-enoyl-CoA = a 4-saturated (2E)-enoyl-CoA. It carries out the reaction a (3E)-enoyl-CoA = a 4-saturated (2E)-enoyl-CoA. The enzyme catalyses a (3S)-3-hydroxyacyl-CoA + NAD(+) = a 3-oxoacyl-CoA + NADH + H(+). It catalyses the reaction (2S,3S)-3-hydroxy-2-methylbutanoyl-CoA = (2E)-2-methylbut-2-enoyl-CoA + H2O. The catalysed reaction is (3E,5Z)-tetradecadienoyl-CoA = (2E,5Z)-tetradecadienoyl-CoA. It carries out the reaction (3E,5Z)-octadienoyl-CoA = (2E,5Z)-octadienoyl-CoA. The enzyme catalyses (3S)-hydroxydecanoyl-CoA + NAD(+) = 3-oxodecanoyl-CoA + NADH + H(+). It catalyses the reaction (3E)-decenoyl-CoA = (2E)-decenoyl-CoA. The catalysed reaction is (3Z)-hexenoyl-CoA = (2E)-hexenoyl-CoA. It carries out the reaction (3E)-hexenoyl-CoA = (2E)-hexenoyl-CoA. The enzyme catalyses (3S)-hydroxydecanoyl-CoA = (2E)-decenoyl-CoA + H2O. It catalyses the reaction (3S)-hydroxyhexanoyl-CoA = (2E)-hexenoyl-CoA + H2O. The catalysed reaction is (3S)-hydroxyhexadecanoyl-CoA + NAD(+) = 3-oxohexadecanoyl-CoA + NADH + H(+). It carries out the reaction (3S)-hydroxyhexadecanoyl-CoA = (2E)-hexadecenoyl-CoA + H2O. The enzyme catalyses (2E)-hexadecenedioyl-CoA + H2O = (3S)-hydroxyhexadecanedioyl-CoA. It catalyses the reaction (3S)-hydroxyhexadecanedioyl-CoA + NAD(+) = 3-oxohexadecanedioyl-CoA + NADH + H(+). The protein operates within lipid metabolism; fatty acid beta-oxidation. With respect to regulation, enzyme activity enhanced by acetylation. Peroxisomal trifunctional enzyme possessing 2-enoyl-CoA hydratase, 3-hydroxyacyl-CoA dehydrogenase, and delta 3, delta 2-enoyl-CoA isomerase activities. Catalyzes two of the four reactions of the long chain fatty acids peroxisomal beta-oxidation pathway. Can also use branched-chain fatty acids such as 2-methyl-2E-butenoyl-CoA as a substrate, which is hydrated into (2S,3S)-3-hydroxy-2-methylbutanoyl-CoA. Optimal isomerase for 2,5 double bonds into 3,5 form isomerization in a range of enoyl-CoA species. Also able to isomerize both 3-cis and 3-trans double bonds into the 2-trans form in a range of enoyl-CoA species. Regulates the amount of medium-chain dicarboxylic fatty acids which are essential regulators of all fatty acid oxidation pathways. Also involved in the degradation of long-chain dicarboxylic acids through peroxisomal beta-oxidation. The chain is Peroxisomal bifunctional enzyme from Rattus norvegicus (Rat).